Consider the following 497-residue polypeptide: Glycerol kinase (497 aa).

Thr-12 is an ADP binding site. ATP-binding residues include Thr-12, Thr-13, and Ser-14. Thr-12 is a sn-glycerol 3-phosphate binding site. Arg-16 contributes to the ADP binding site. Arg-82, Glu-83, Tyr-132, and Asp-239 together coordinate sn-glycerol 3-phosphate. Arg-82, Glu-83, Tyr-132, Asp-239, and Gln-240 together coordinate glycerol. ADP is bound by residues Thr-261 and Gly-303. ATP-binding residues include Thr-261, Gly-303, Gln-307, and Gly-402. ADP contacts are provided by Gly-402 and Asn-406.

This sequence belongs to the FGGY kinase family. Homodimer.

The catalysed reaction is glycerol + ATP = sn-glycerol 3-phosphate + ADP + H(+). Its pathway is polyol metabolism; glycerol degradation via glycerol kinase pathway; sn-glycerol 3-phosphate from glycerol: step 1/1. Its function is as follows. Key enzyme in the regulation of glycerol uptake and metabolism. Catalyzes the phosphorylation of glycerol to yield sn-glycerol 3-phosphate. Can utilize other nucleoside triphosphates (GTP, CTP, UTP and ITP) as a phosphoryl donor. In Thermococcus kodakarensis (strain ATCC BAA-918 / JCM 12380 / KOD1) (Pyrococcus kodakaraensis (strain KOD1)), this protein is Glycerol kinase.